A 380-amino-acid polypeptide reads, in one-letter code: Cytosolic acyl coenzyme A thioester hydrolase (380 aa).

The HotDog ACOT-type 1 domain maps to 50-168 (PCGACITGRI…TLWYVPLSLK (119 aa)). Asparagine 66 is a catalytic residue. N6-acetyllysine is present on residues lysine 168 and lysine 198. The HotDog ACOT-type 2 domain maps to 224-338 (SYSQSSLIHL…FFTYVSLSQE (115 aa)). Residue aspartate 255 is part of the active site. An N6-acetyllysine modification is found at lysine 283. Positions 350–380 (ETEDEKKRFEEGKGRYLQMKAKRQGHAEPQP) are disordered. Residues 353–363 (DEKKRFEEGKG) show a composition bias toward basic and acidic residues.

Homohexamer. As to expression, isoform 4 is expressed exclusively in brain.

The protein resides in the cytoplasm. It is found in the cytosol. It localises to the mitochondrion. It carries out the reaction hexadecanoyl-CoA + H2O = hexadecanoate + CoA + H(+). It catalyses the reaction octanoyl-CoA + H2O = octanoate + CoA + H(+). The enzyme catalyses dodecanoyl-CoA + H2O = dodecanoate + CoA + H(+). The catalysed reaction is (9Z)-octadecenoyl-CoA + H2O = (9Z)-octadecenoate + CoA + H(+). It carries out the reaction tetradecanoyl-CoA + H2O = tetradecanoate + CoA + H(+). It catalyses the reaction decanoyl-CoA + H2O = decanoate + CoA + H(+). The enzyme catalyses octadecanoyl-CoA + H2O = octadecanoate + CoA + H(+). It participates in lipid metabolism; fatty acid metabolism. Functionally, catalyzes the hydrolysis of acyl-CoAs into free fatty acids and coenzyme A (CoASH), regulating their respective intracellular levels. Preferentially hydrolyzes palmitoyl-CoA, but has a broad specificity acting on other fatty acyl-CoAs with chain-lengths of C8-C18. May play an important physiological function in brain. The sequence is that of Cytosolic acyl coenzyme A thioester hydrolase (ACOT7) from Homo sapiens (Human).